The primary structure comprises 266 residues: UPF0354 protein lin1649 (266 aa).

Belongs to the UPF0354 family.

This is UPF0354 protein lin1649 from Listeria innocua serovar 6a (strain ATCC BAA-680 / CLIP 11262).